A 394-amino-acid polypeptide reads, in one-letter code: uncharacterized protein (394 aa).

A run of 12 helical transmembrane segments spans residues leucine 13–isoleucine 33, methionine 35–threonine 55, threonine 73–valine 95, alanine 110–leucine 130, isoleucine 152–leucine 172, leucine 179–valine 198, valine 216–proline 236, valine 241–leucine 261, valine 267–leucine 287, valine 293–valine 313, methionine 340–isoleucine 360, and isoleucine 372–alanine 392.

Its subcellular location is the membrane. This is an uncharacterized protein from Saccharomyces cerevisiae (strain ATCC 204508 / S288c) (Baker's yeast).